The chain runs to 1073 residues: Ring-infected erythrocyte surface antigen (1073 aa).

An N-terminal signal peptide occupies residues 1–65 (MRPFHAYSWI…IIGILYIILN (65 aa)). An N-linked (GlcNAc...) asparagine glycan is attached at Asn-71. Positions 428-444 (DTSEEESVEENEEEHTV) are enriched in acidic residues. The segment at 428 to 514 (DTSEEESVEE…SDVQQTSEAA (87 aa)) is disordered. The segment at 436-504 (EENEEEHTVD…VAEEHVEEPA (69 aa)) is tandem repeats 1. Positions 445–456 (DDEHVEEHTADD) are enriched in basic and acidic residues. Over residues 457–470 (EHVEEPTVADDEHV) the composition is skewed to acidic residues. Residues 476–502 (ADEHVEEPTVAEEHVEEPTVAEEHVEE) show a composition bias toward basic and acidic residues. Positions 521–589 (DTLYYDILGV…KRWYNKYGYD (69 aa)) constitute a J domain. N-linked (GlcNAc...) asparagine glycans are attached at residues Asn-639, Asn-773, and Asn-777. The interval 891 to 1073 (NAEENVEHDA…VEEHNEEYDE (183 aa)) is tandem repeats 2. Residues 894–930 (ENVEHDAEENVEHDAEENVEHDAEENVEHDAEENVEH) show a composition bias toward basic and acidic residues. Residues 894–1073 (ENVEHDAEEN…VEEHNEEYDE (180 aa)) form a disordered region. Acidic residues predominate over residues 931 to 1073 (DAEENVEENV…VEEHNEEYDE (143 aa)).

The Tyr residues in the variant tetrameric sequences in the RESA repeat are possibly phosphorylated (by homology with band 3).

Its subcellular location is the cell membrane. Functionally, may disrupt the normal intermolecular interactions of the cytoplasmic domain of band 3 and thereby facilitate the invagination of the red cell membrane which is necessary for the formation of the parasitophorous vacuole. The polypeptide is Ring-infected erythrocyte surface antigen (RESA) (Plasmodium falciparum (isolate FC27 / Papua New Guinea)).